Here is a 260-residue protein sequence, read N- to C-terminus: NAD-capped RNA hydrolase NudC (260 aa).

Arginine 69 is a binding site for substrate. Zn(2+) contacts are provided by cysteine 98 and cysteine 101. Glutamate 111 serves as a coordination point for substrate. Residues cysteine 116 and cysteine 119 each coordinate Zn(2+). Residue tyrosine 124 coordinates substrate. The region spanning 125–248 (PQIAPCIIVA…TVARRLIEDT (124 aa)) is the Nudix hydrolase domain. Residues alanine 158, glutamate 174, and glutamate 178 each contribute to the a divalent metal cation site. A Nudix box motif is present at residues 159-180 (GFVEVGETLEQTVVREVMEESQ). 192–199 (QPWPFPHS) contacts substrate. Glutamate 219 serves as a coordination point for a divalent metal cation. Alanine 241 serves as a coordination point for substrate.

It belongs to the Nudix hydrolase family. NudC subfamily. As to quaternary structure, homodimer. Mg(2+) serves as cofactor. Mn(2+) is required as a cofactor. The cofactor is Zn(2+).

The catalysed reaction is a 5'-end NAD(+)-phospho-ribonucleoside in mRNA + H2O = a 5'-end phospho-adenosine-phospho-ribonucleoside in mRNA + beta-nicotinamide D-ribonucleotide + 2 H(+). The enzyme catalyses NAD(+) + H2O = beta-nicotinamide D-ribonucleotide + AMP + 2 H(+). It carries out the reaction NADH + H2O = reduced beta-nicotinamide D-ribonucleotide + AMP + 2 H(+). Its function is as follows. mRNA decapping enzyme that specifically removes the nicotinamide adenine dinucleotide (NAD) cap from a subset of mRNAs by hydrolyzing the diphosphate linkage to produce nicotinamide mononucleotide (NMN) and 5' monophosphate mRNA. The NAD-cap is present at the 5'-end of some mRNAs and stabilizes RNA against 5'-processing. Has preference for mRNAs with a 5'-end purine. Catalyzes the hydrolysis of a broad range of dinucleotide pyrophosphates. This Pectobacterium atrosepticum (strain SCRI 1043 / ATCC BAA-672) (Erwinia carotovora subsp. atroseptica) protein is NAD-capped RNA hydrolase NudC.